We begin with the raw amino-acid sequence, 287 residues long: Transcription initiation factor IIB 1 (287 aa).

A TFIIB-type zinc finger spans residues 3-31 (HPHRCPECDGTIRETDTEHVCADCGLVVT). Residues Cys7, Cys10, Cys23, and Cys26 each contribute to the Zn(2+) site. Basic and acidic residues predominate over residues 40–53 (EWRTFSDDPDHAPE). Residues 40–63 (EWRTFSDDPDHAPERTGAPLTRSR) form a disordered region. Repeat copies occupy residues 111-194 (TEIR…NRDL) and 205-286 (EYLP…NLTD).

It belongs to the TFIIB family.

Its function is as follows. Stabilizes TBP binding to an archaeal box-A promoter. Also responsible for recruiting RNA polymerase II to the pre-initiation complex (DNA-TBP-TFIIB). This Halobacterium salinarum (strain ATCC 700922 / JCM 11081 / NRC-1) (Halobacterium halobium) protein is Transcription initiation factor IIB 1.